The following is a 181-amino-acid chain: NADH-quinone oxidoreductase subunit I (181 aa).

2 4Fe-4S ferredoxin-type domains span residues 51–80 and 90–119; these read TRNSNGSERCVACNLCSAVCPVNCISLKKS and KSFQINLSRCIFCGLCEEACPTMAIQLTPD. [4Fe-4S] cluster-binding residues include C60, C63, C66, C70, C99, C102, C105, and C109.

This sequence belongs to the complex I 23 kDa subunit family. In terms of assembly, NDH-1 is composed of 13 different subunits. Subunits NuoA, H, J, K, L, M, N constitute the membrane sector of the complex. [4Fe-4S] cluster is required as a cofactor.

It localises to the cell membrane. It catalyses the reaction a quinone + NADH + 5 H(+)(in) = a quinol + NAD(+) + 4 H(+)(out). In terms of biological role, NDH-1 shuttles electrons from NADH, via FMN and iron-sulfur (Fe-S) centers, to quinones in the respiratory chain. The immediate electron acceptor for the enzyme in this species is believed to be ubiquinone. Couples the redox reaction to proton translocation (for every two electrons transferred, four hydrogen ions are translocated across the cytoplasmic membrane), and thus conserves the redox energy in a proton gradient. This chain is NADH-quinone oxidoreductase subunit I, found in Buchnera aphidicola subsp. Cinara cedri (strain Cc).